The sequence spans 61 residues: Small ribosomal subunit protein uS14 (61 aa).

Zn(2+) contacts are provided by cysteine 24, cysteine 27, cysteine 40, and cysteine 43.

Belongs to the universal ribosomal protein uS14 family. Zinc-binding uS14 subfamily. In terms of assembly, part of the 30S ribosomal subunit. Contacts proteins S3 and S10. Zn(2+) is required as a cofactor.

Binds 16S rRNA, required for the assembly of 30S particles and may also be responsible for determining the conformation of the 16S rRNA at the A site. The sequence is that of Small ribosomal subunit protein uS14 from Staphylococcus aureus (strain USA300 / TCH1516).